The sequence spans 311 residues: tRNA-cytidine(32) 2-sulfurtransferase (311 aa).

The PP-loop motif signature appears at 47–52 (SGGKDS). The [4Fe-4S] cluster site is built by Cys122, Cys125, and Cys213.

It belongs to the TtcA family. In terms of assembly, homodimer. The cofactor is Mg(2+). [4Fe-4S] cluster is required as a cofactor.

Its subcellular location is the cytoplasm. The catalysed reaction is cytidine(32) in tRNA + S-sulfanyl-L-cysteinyl-[cysteine desulfurase] + AH2 + ATP = 2-thiocytidine(32) in tRNA + L-cysteinyl-[cysteine desulfurase] + A + AMP + diphosphate + H(+). Its pathway is tRNA modification. Functionally, catalyzes the ATP-dependent 2-thiolation of cytidine in position 32 of tRNA, to form 2-thiocytidine (s(2)C32). The sulfur atoms are provided by the cysteine/cysteine desulfurase (IscS) system. The protein is tRNA-cytidine(32) 2-sulfurtransferase of Citrobacter koseri (strain ATCC BAA-895 / CDC 4225-83 / SGSC4696).